The sequence spans 534 residues: UDP-glucuronosyltransferase 1A3 (534 aa).

Residues 1 to 28 form the signal peptide; the sequence is MATGLQVPLPWLATGLLLLLSVQPWAES. Asn119, Asn142, Asn296, and Asn348 each carry an N-linked (GlcNAc...) asparagine glycan. The chain crosses the membrane as a helical span at residues 492-508; sequence VIGFLLAVVLTVAFITF.

Belongs to the UDP-glycosyltransferase family. As to quaternary structure, homodimer. Homooligomer. Interacts with UGT1A1, UGT1A4, UGT1A6, UGT1A7, UGT1A8, UGT1A9 and UGT1A10 to form heterodimers. Isoform 1 interacts with isoform 2/i2 suggesting that oligomerization is involved in negative regulation of transferase activity by isoform 2. Isoform 1 also interacts with respective i2 isoforms of UGT1A1, UGT1A4, UGT1A6, UGT1A7, UGT1A8, UGT1A9 and UGT1A10. As to expression, expressed in liver, kidney, colon, esophagus and small intestine. In terms of tissue distribution, expressed in liver, kidney and colon. Not expressed in esophagus and small intestine.

It localises to the endoplasmic reticulum membrane. It carries out the reaction glucuronate acceptor + UDP-alpha-D-glucuronate = acceptor beta-D-glucuronoside + UDP + H(+). It catalyses the reaction 17beta-estradiol + UDP-alpha-D-glucuronate = 17beta-estradiol 3-O-(beta-D-glucuronate) + UDP + H(+). The enzyme catalyses 17beta-estradiol + UDP-alpha-D-glucuronate = 17beta-estradiol 17-O-(beta-D-glucuronate) + UDP + H(+). The catalysed reaction is 17alpha-estradiol + UDP-alpha-D-glucuronate = 17alpha-estradiol 3-O-(beta-D-glucuronate) + UDP + H(+). It carries out the reaction estrone + UDP-alpha-D-glucuronate = estrone 3-O-(beta-D-glucuronate) + UDP + H(+). It catalyses the reaction chenodeoxycholate + UDP-alpha-D-glucuronate = chenodeoxycholoyl-24-O-(beta-D-glucuronate) + UDP. The enzyme catalyses deoxycholate + UDP-alpha-D-glucuronate = deoxycholoyl-24-O-(beta-D-glucuronate) + UDP. The catalysed reaction is lithocholate + UDP-alpha-D-glucuronate = lithocholoyl-24-O-(beta-D-glucuronate) + UDP. It carries out the reaction hyodeoxycholate + UDP-alpha-D-glucuronate = hyodeoxycholoyl-24-O-(beta-D-glucuronate) + UDP. It catalyses the reaction hyocholate + UDP-alpha-D-glucuronate = hyocholoyl-24-O-(beta-D-glucuronate) + UDP. The enzyme catalyses calcidiol + UDP-alpha-D-glucuronate = calcidiol 25-O-(beta-D-glucuronide) + UDP + H(+). The catalysed reaction is (E)-ferulate + UDP-alpha-D-glucuronate = (E)-4-O-(beta-D-glucuronosyl)-ferulate + UDP + H(+). It carries out the reaction (E)-ferulate + UDP-alpha-D-glucuronate = (E)-ferulic acid beta-D-glucuronate ester + UDP. It catalyses the reaction losartan + UDP-alpha-D-glucuronate = losartan-2-N-beta-D-glucuronide + UDP. The enzyme catalyses candesartan + UDP-alpha-D-glucuronate = candesartan-2-N-beta-D-glucuronide + UDP. The catalysed reaction is zolasartan + UDP-alpha-D-glucuronate = zolarsartan-2-N-beta-D-glucuronide + UDP. In terms of biological role, UDP-glucuronosyltransferase (UGT) that catalyzes phase II biotransformation reactions in which lipophilic substrates are conjugated with glucuronic acid to increase the metabolite's water solubility, thereby facilitating excretion into either the urine or bile. Essential for the elimination and detoxification of drugs, xenobiotics and endogenous compounds. Catalyzes the glucuronidation of endogenous estrogen hormones such as estradiol and estrone. Contributes to bile acid (BA) detoxification by catalyzing the glucuronidation of BA substrates, which are natural detergents for dietary lipids absorption. Involved in the glucuronidation of calcidiol, which is the major circulating form of vitamin D3, essential for the regulation of calcium and phosphate homeostasis. Involved in the glucuronidation of the phytochemical ferulic acid at the phenolic or the carboxylic acid group. Involved in the glucuronidation of the AGTR1 angiotensin receptor antagonists losartan, candesartan and zolarsartan, which can inhibit the effect of angiotensin II. Lacks UDP-glucuronosyltransferase (UGT) activity but acts as a negative regulator of isoform 1. The sequence is that of UDP-glucuronosyltransferase 1A3 from Homo sapiens (Human).